A 1362-amino-acid chain; its full sequence is Mediator of RNA polymerase II transcription subunit 12 (1362 aa).

The tract at residues 31–51 (LRPPDDIHPLVDPARIGDSVY) is disordered.

It belongs to the Mediator complex subunit 12 family. Component of the SRB8-11 complex, which itself associates with the Mediator complex.

It is found in the nucleus. Component of the SRB8-11 complex. The SRB8-11 complex is a regulatory module of the Mediator complex which is itself involved in regulation of basal and activated RNA polymerase II-dependent transcription. The SRB8-11 complex may be involved in the transcriptional repression of a subset of genes regulated by Mediator. It may inhibit the association of the Mediator complex with RNA polymerase II to form the holoenzyme complex. This Yarrowia lipolytica (strain CLIB 122 / E 150) (Yeast) protein is Mediator of RNA polymerase II transcription subunit 12 (SRB8).